The chain runs to 100 residues: DNA-binding protein HU (100 aa).

This sequence belongs to the bacterial histone-like protein family.

Histone-like DNA-binding protein which is capable of wrapping DNA to stabilize it, and thus to prevent its denaturation under extreme environmental conditions. The sequence is that of DNA-binding protein HU (hup) from Synechocystis sp. (strain ATCC 27184 / PCC 6803 / Kazusa).